A 592-amino-acid polypeptide reads, in one-letter code: Cryptochrome-2 (592 aa).

A Photolyase/cryptochrome alpha/beta domain is found at 21 to 150 (ASSVHWFRKG…EVVTENSHTL (130 aa)). Residue Lys-29 forms a Glycyl lysine isopeptide (Lys-Gly) (interchain with G-Cter in ubiquitin) linkage. Ser-89 is subject to Phosphoserine. Glycyl lysine isopeptide (Lys-Gly) (interchain with G-Cter in ubiquitin) cross-links involve residues Lys-125 and Lys-241. Ser-265 is subject to Phosphoserine; by MAPK. Position 270 (Ser-270) interacts with FAD. A Phosphoserine modification is found at Ser-298. Gln-307 is an FAD binding site. Residue Lys-347 forms a Glycyl lysine isopeptide (Lys-Gly) (interchain with G-Cter in ubiquitin) linkage. Residues His-373 and 405 to 407 (DAD) each bind FAD. Residues 389 to 488 (WVSWESGVRV…IIGVDYPRPI (100 aa)) form a required for inhibition of CLOCK-BMAL1-mediated transcription region. Residues Lys-474 and Lys-503 each participate in a glycyl lysine isopeptide (Lys-Gly) (interchain with G-Cter in ubiquitin) cross-link. The disordered stretch occupies residues 532–592 (VAEPGSSQAG…PTQEPASKDS (61 aa)). Polar residues predominate over residues 536–547 (GSSQAGSISNTG). Ser-553 carries the phosphoserine; by GSK3-beta modification. Ser-557 is subject to Phosphoserine; by DYRK1A and MAPK. A compositionally biased stretch (polar residues) spans 582 to 592 (MPTQEPASKDS).

Belongs to the DNA photolyase class-1 family. As to quaternary structure, component of the circadian core oscillator, which includes the CRY proteins, CLOCK or NPAS2, BMAL1 or BMAL2, CSNK1D and/or CSNK1E, TIMELESS, and the PER proteins. Interacts with TIMELESS. Interacts directly with PER1, PER2 and PER3; interaction with PER2 inhibits its ubiquitination and vice versa. Interacts with CLOCK-BMAL1. Interacts with BMAL1. Interacts with CLOCK. Interacts with NFIL3. Interacts with FBXL3 and FBXL21. FBXL3, PER2 and the cofactor FAD compete for overlapping binding sites. FBXL3 cannot bind CRY2 that interacts already with PER2 or that contains bound FAD. Interacts with PPP5C (via TPR repeats); the interaction down-regulates the PPP5C phosphatase activity on CSNK1E. Interacts with nuclear receptors AR and NR3C1/GR; the interaction is ligand dependent. Interacts with PRKDC. Interacts with CIART. Interacts with DDB1, USP7 and TARDBP. Interacts with HNF4A. Interacts with PPARA. Interacts with PPARG in a ligand-dependent manner. Interacts with PPARD (via domain NR LBD) in a ligand-dependent manner. Interacts with NR1I2 (via domain NR LBD) in a ligand-dependent manner. Interacts with NR1I3 and VDR in a ligand-dependent manner. FAD serves as cofactor. The cofactor is (6R)-5,10-methylene-5,6,7,8-tetrahydrofolate. In terms of processing, phosphorylation on Ser-265 by MAPK is important for the inhibition of CLOCK-BMAL1-mediated transcriptional activity. Phosphorylation by CSKNE requires interaction with PER1 or PER2. Phosphorylated in a circadian manner at Ser-553 and Ser-557 in the suprachiasmatic nucleus (SCN) and liver. Phosphorylation at Ser-557 by DYRK1A promotes subsequent phosphorylation at Ser-553 by GSK3-beta: the two-step phosphorylation at the neighboring Ser residues leads to its proteasomal degradation. Ubiquitinated by the SCF(FBXL3) and SCF(FBXL21) complexes, regulating the balance between degradation and stabilization. The SCF(FBXL3) complex is mainly nuclear and mediates ubiquitination and subsequent degradation of CRY2. In contrast, cytoplasmic SCF(FBXL21) complex-mediated ubiquitination leads to stabilize CRY2 and counteract the activity of the SCF(FBXL3) complex. The SCF(FBXL3) and SCF(FBXL21) complexes probably mediate ubiquitination at different Lys residues. The SCF(FBXL3) complex recognizes and binds CRY2 phosphorylated at Ser-553 and Ser-557. Ubiquitination may be inhibited by PER2. Deubiquitinated by USP7. As to expression, expression in the retina is restricted to the photoreceptor layer (at protein level). Expressed in all tissues examined including heart, brain, spleen, lung, liver, skeletal muscle, kidney and testis. Weak expression in spleen.

The protein resides in the cytoplasm. The protein localises to the nucleus. With respect to regulation, KL001 (N-[3-(9H-carbazol-9-yl)-2-hydroxypropyl]-N-(2-furanylmethyl)-methanesulfonamide) binds to CRY1 and stabilizes it by inhibiting FBXL3- and ubiquitin-dependent degradation of CRY1 resulting in lengthening of the circadian periods. KL001-mediated CRY1 stabilization can inhibit glucagon-induced gluconeogenesis in primary hepatocytes. Transcriptional repressor which forms a core component of the circadian clock. The circadian clock, an internal time-keeping system, regulates various physiological processes through the generation of approximately 24 hour circadian rhythms in gene expression, which are translated into rhythms in metabolism and behavior. It is derived from the Latin roots 'circa' (about) and 'diem' (day) and acts as an important regulator of a wide array of physiological functions including metabolism, sleep, body temperature, blood pressure, endocrine, immune, cardiovascular, and renal function. Consists of two major components: the central clock, residing in the suprachiasmatic nucleus (SCN) of the brain, and the peripheral clocks that are present in nearly every tissue and organ system. Both the central and peripheral clocks can be reset by environmental cues, also known as Zeitgebers (German for 'timegivers'). The predominant Zeitgeber for the central clock is light, which is sensed by retina and signals directly to the SCN. The central clock entrains the peripheral clocks through neuronal and hormonal signals, body temperature and feeding-related cues, aligning all clocks with the external light/dark cycle. Circadian rhythms allow an organism to achieve temporal homeostasis with its environment at the molecular level by regulating gene expression to create a peak of protein expression once every 24 hours to control when a particular physiological process is most active with respect to the solar day. Transcription and translation of core clock components (CLOCK, NPAS2, BMAL1, BMAL2, PER1, PER2, PER3, CRY1 and CRY2) plays a critical role in rhythm generation, whereas delays imposed by post-translational modifications (PTMs) are important for determining the period (tau) of the rhythms (tau refers to the period of a rhythm and is the length, in time, of one complete cycle). A diurnal rhythm is synchronized with the day/night cycle, while the ultradian and infradian rhythms have a period shorter and longer than 24 hours, respectively. Disruptions in the circadian rhythms contribute to the pathology of cardiovascular diseases, cancer, metabolic syndromes and aging. A transcription/translation feedback loop (TTFL) forms the core of the molecular circadian clock mechanism. Transcription factors, CLOCK or NPAS2 and BMAL1 or BMAL2, form the positive limb of the feedback loop, act in the form of a heterodimer and activate the transcription of core clock genes and clock-controlled genes (involved in key metabolic processes), harboring E-box elements (5'-CACGTG-3') within their promoters. The core clock genes: PER1/2/3 and CRY1/2 which are transcriptional repressors form the negative limb of the feedback loop and interact with the CLOCK|NPAS2-BMAL1|BMAL2 heterodimer inhibiting its activity and thereby negatively regulating their own expression. This heterodimer also activates nuclear receptors NR1D1/2 and RORA/B/G, which form a second feedback loop and which activate and repress BMAL1 transcription, respectively. CRY1 and CRY2 have redundant functions but also differential and selective contributions at least in defining the pace of the SCN circadian clock and its circadian transcriptional outputs. Less potent transcriptional repressor in cerebellum and liver than CRY1, though less effective in lengthening the period of the SCN oscillator. Seems to play a critical role in tuning SCN circadian period by opposing the action of CRY1. With CRY1, dispensable for circadian rhythm generation but necessary for the development of intercellular networks for rhythm synchrony. May mediate circadian regulation of cAMP signaling and gluconeogenesis by blocking glucagon-mediated increases in intracellular cAMP concentrations and in CREB1 phosphorylation. Besides its role in the maintenance of the circadian clock, is also involved in the regulation of other processes. Plays a key role in glucose and lipid metabolism modulation, in part, through the transcriptional regulation of genes involved in these pathways, such as LEP or ACSL4. Represses glucocorticoid receptor NR3C1/GR-induced transcriptional activity by binding to glucocorticoid response elements (GREs). Represses the CLOCK-BMAL1 induced transcription of BHLHE40/DEC1 and NAMPT. Represses PPARD and its target genes in the skeletal muscle and limits exercise capacity. Represses the transcriptional activity of NR1I2. The sequence is that of Cryptochrome-2 (Cry2) from Mus musculus (Mouse).